The following is a 396-amino-acid chain: Elongation factor Tu 2 (396 aa).

Residues 10–206 (KPHVNVGTIG…ALDSYIPLPE (197 aa)) form the tr-type G domain. The segment at 19-26 (GHVDHGKT) is G1. 19-26 (GHVDHGKT) provides a ligand contact to GTP. Thr-26 lines the Mg(2+) pocket. The interval 60 to 64 (GITIN) is G2. The G3 stretch occupies residues 81–84 (DCPG). Residues 81–85 (DCPGH) and 136–139 (NKCD) each bind GTP. The interval 136–139 (NKCD) is G4. The G5 stretch occupies residues 174-176 (SAK).

Belongs to the TRAFAC class translation factor GTPase superfamily. Classic translation factor GTPase family. EF-Tu/EF-1A subfamily. As to quaternary structure, monomer.

Its subcellular location is the cytoplasm. The catalysed reaction is GTP + H2O = GDP + phosphate + H(+). GTP hydrolase that promotes the GTP-dependent binding of aminoacyl-tRNA to the A-site of ribosomes during protein biosynthesis. The sequence is that of Elongation factor Tu 2 from Albidiferax ferrireducens (strain ATCC BAA-621 / DSM 15236 / T118) (Rhodoferax ferrireducens).